The following is a 111-amino-acid chain: Large ribosomal subunit protein uL22 (111 aa).

It belongs to the universal ribosomal protein uL22 family. In terms of assembly, part of the 50S ribosomal subunit.

This protein binds specifically to 23S rRNA; its binding is stimulated by other ribosomal proteins, e.g. L4, L17, and L20. It is important during the early stages of 50S assembly. It makes multiple contacts with different domains of the 23S rRNA in the assembled 50S subunit and ribosome. Functionally, the globular domain of the protein is located near the polypeptide exit tunnel on the outside of the subunit, while an extended beta-hairpin is found that lines the wall of the exit tunnel in the center of the 70S ribosome. The protein is Large ribosomal subunit protein uL22 of Alkalilimnicola ehrlichii (strain ATCC BAA-1101 / DSM 17681 / MLHE-1).